The sequence spans 206 residues: Large ribosomal subunit protein uL4 (206 aa).

A disordered region spans residues 49 to 79 (KVKTRSEISRTTKKMYKQKGTGNARHGAASA).

The protein belongs to the universal ribosomal protein uL4 family. As to quaternary structure, part of the 50S ribosomal subunit.

In terms of biological role, one of the primary rRNA binding proteins, this protein initially binds near the 5'-end of the 23S rRNA. It is important during the early stages of 50S assembly. It makes multiple contacts with different domains of the 23S rRNA in the assembled 50S subunit and ribosome. Functionally, forms part of the polypeptide exit tunnel. The chain is Large ribosomal subunit protein uL4 from Methylobacterium sp. (strain 4-46).